The primary structure comprises 138 residues: MAKAIPKISSRRNGRISSRKGARRIPKGVIHVQASFNNTIVTVTDVRGRVVSWSSAGTSGFKGTRRGTPFAAQTAAANAIRTVVDQGMQRAEVMIKGPGLGRDAALRAIRRSGILLTFVRDVTPMPHNGCRPPKKRRV.

Residues 1-22 (MAKAIPKISSRRNGRISSRKGA) form a disordered region. Over residues 9–22 (SSRRNGRISSRKGA) the composition is skewed to basic residues.

It belongs to the universal ribosomal protein uS11 family. Part of the 30S ribosomal subunit.

Its subcellular location is the plastid. The protein localises to the chloroplast. The sequence is that of Small ribosomal subunit protein uS11c from Solanum bulbocastanum (Wild potato).